The following is a 558-amino-acid chain: NAD-dependent malic enzyme 2 (558 aa).

The active-site Proton donor is Y101. R154 lines the NAD(+) pocket. K172 (proton acceptor) is an active-site residue. Residues E243, D244, and D267 each contribute to the a divalent metal cation site. Residues D267 and N411 each contribute to the NAD(+) site.

This sequence belongs to the malic enzymes family. As to quaternary structure, homotetramer. Requires Mg(2+) as cofactor. Mn(2+) is required as a cofactor.

The catalysed reaction is (S)-malate + NAD(+) = pyruvate + CO2 + NADH. It carries out the reaction oxaloacetate + H(+) = pyruvate + CO2. This chain is NAD-dependent malic enzyme 2, found in Photobacterium profundum (strain SS9).